A 603-amino-acid polypeptide reads, in one-letter code: Proline--tRNA ligase (603 aa).

The protein belongs to the class-II aminoacyl-tRNA synthetase family. ProS type 1 subfamily. Homodimer.

The protein localises to the cytoplasm. It carries out the reaction tRNA(Pro) + L-proline + ATP = L-prolyl-tRNA(Pro) + AMP + diphosphate. Its function is as follows. Catalyzes the attachment of proline to tRNA(Pro) in a two-step reaction: proline is first activated by ATP to form Pro-AMP and then transferred to the acceptor end of tRNA(Pro). As ProRS can inadvertently accommodate and process non-cognate amino acids such as alanine and cysteine, to avoid such errors it has two additional distinct editing activities against alanine. One activity is designated as 'pretransfer' editing and involves the tRNA(Pro)-independent hydrolysis of activated Ala-AMP. The other activity is designated 'posttransfer' editing and involves deacylation of mischarged Ala-tRNA(Pro). The misacylated Cys-tRNA(Pro) is not edited by ProRS. In Microcystis aeruginosa (strain NIES-843 / IAM M-2473), this protein is Proline--tRNA ligase.